Reading from the N-terminus, the 279-residue chain is Small ribosomal subunit protein uS2 (279 aa).

The interval 232–260 (KVDMEAAGENAPKGAGKKKNTKARMDKAE) is disordered.

Belongs to the universal ribosomal protein uS2 family.

In Phocaeicola vulgatus (strain ATCC 8482 / DSM 1447 / JCM 5826 / CCUG 4940 / NBRC 14291 / NCTC 11154) (Bacteroides vulgatus), this protein is Small ribosomal subunit protein uS2.